The following is a 302-amino-acid chain: Probable lipid kinase YegS-like (302 aa).

In terms of domain architecture, DAGKc spans 1–129 (MDKDKVLLVL…IDLGEVNGKL (129 aa)). Residues Thr-39, 65–71 (GDGTLRE), and Thr-92 each bind ATP. Mg(2+) is bound by residues Arg-210, Asp-213, and Leu-215. Glu-268 (proton acceptor) is an active-site residue.

It belongs to the diacylglycerol/lipid kinase family. YegS lipid kinase subfamily. Mg(2+) serves as cofactor. It depends on Ca(2+) as a cofactor.

Its subcellular location is the cytoplasm. Its function is as follows. Probably phosphorylates lipids; the in vivo substrate is unknown. In Pseudomonas aeruginosa (strain ATCC 15692 / DSM 22644 / CIP 104116 / JCM 14847 / LMG 12228 / 1C / PRS 101 / PAO1), this protein is Probable lipid kinase YegS-like.